Reading from the N-terminus, the 131-residue chain is Profilin-8 (131 aa).

A disulfide bridge connects residues Cys-13 and Cys-115. Positions 81–97 match the Involved in PIP2 interaction motif; it reads AVIRGKKGSGGITVKKT. Thr-111 carries the post-translational modification Phosphothreonine.

Belongs to the profilin family. In terms of assembly, occurs in many kinds of cells as a complex with monomeric actin in a 1:1 ratio. Phosphorylated by MAP kinases.

The protein resides in the cytoplasm. The protein localises to the cytoskeleton. Its function is as follows. Binds to actin and affects the structure of the cytoskeleton. At high concentrations, profilin prevents the polymerization of actin, whereas it enhances it at low concentrations. The protein is Profilin-8 of Zea mays (Maize).